Reading from the N-terminus, the 655-residue chain is p-hydroxybenzoic acid efflux pump subunit AaeB (655 aa).

A run of 11 helical transmembrane segments spans residues Phe13 to Leu33, Trp38 to Pro58, Leu69 to Ile89, Leu93 to Val113, Trp121 to Leu141, Glu152 to Ile172, Leu370 to Val390, Phe407 to Pro427, Gln431 to Val451, Met459 to Phe479, and Phe482 to Leu502.

It belongs to the aromatic acid exporter ArAE (TC 2.A.85) family.

It is found in the cell inner membrane. Functionally, forms an efflux pump with AaeA. Could function as a metabolic relief valve, allowing to eliminate certain compounds when they accumulate to high levels in the cell. This chain is p-hydroxybenzoic acid efflux pump subunit AaeB, found in Shigella sonnei (strain Ss046).